The primary structure comprises 449 residues: tRNA modification GTPase MnmE (449 aa).

(6S)-5-formyl-5,6,7,8-tetrahydrofolate is bound by residues arginine 24, glutamate 85, and arginine 124. Positions glycine 220–serine 369 constitute a TrmE-type G domain. A K(+)-binding site is contributed by asparagine 230. Residues asparagine 230–serine 235, serine 249–threonine 255, and aspartate 274–glycine 277 each bind GTP. Serine 234 lines the Mg(2+) pocket. K(+) is bound by residues serine 249, isoleucine 251, and threonine 254. Threonine 255 serves as a coordination point for Mg(2+). Lysine 449 is a binding site for (6S)-5-formyl-5,6,7,8-tetrahydrofolate.

Belongs to the TRAFAC class TrmE-Era-EngA-EngB-Septin-like GTPase superfamily. TrmE GTPase family. Homodimer. Heterotetramer of two MnmE and two MnmG subunits. It depends on K(+) as a cofactor.

Its subcellular location is the cytoplasm. Its function is as follows. Exhibits a very high intrinsic GTPase hydrolysis rate. Involved in the addition of a carboxymethylaminomethyl (cmnm) group at the wobble position (U34) of certain tRNAs, forming tRNA-cmnm(5)s(2)U34. The chain is tRNA modification GTPase MnmE from Akkermansia muciniphila (strain ATCC BAA-835 / DSM 22959 / JCM 33894 / BCRC 81048 / CCUG 64013 / CIP 107961 / Muc).